Here is a 412-residue protein sequence, read N- to C-terminus: uncharacterized protein (412 aa).

Positions 1-17 (MPSQGNNKNSENITQNP) are enriched in polar residues. Disordered stretches follow at residues 1 to 20 (MPSQGNNKNSENITQNPIEG), 223 to 243 (EQAVGQPIEQQSISDDEARQT), and 310 to 412 (QKQM…NPVA). The segment covering 340–355 (KLNSNTRGSSKRPSVN) has biased composition (polar residues). The span at 361–379 (GQRGRGGRGFYRGGRGRGG) shows a compositional bias: gly residues. Residues 390 to 402 (SNSNNSTSQPSPN) are compositionally biased toward low complexity. Positions 403–412 (AELSNFNPVA) are enriched in polar residues.

This is an uncharacterized protein from Schizosaccharomyces pombe (strain 972 / ATCC 24843) (Fission yeast).